Reading from the N-terminus, the 97-residue chain is uncharacterized protein (97 aa).

The next 3 helical transmembrane spans lie at 7–27 (CIAPLIYLVFGVSSTWLIGLG), 34–54 (IPMLIISLCAFAYGFWLLMFS), and 69–89 (IVLYWIVFIVMIFFLTYPTIL).

The protein localises to the cell membrane. This is an uncharacterized protein from Haemophilus influenzae (strain ATCC 51907 / DSM 11121 / KW20 / Rd).